The sequence spans 890 residues: DNA mismatch repair protein MutS (890 aa).

ATP is bound at residue 607-614 (GPNMSGKS).

The protein belongs to the DNA mismatch repair MutS family.

Its function is as follows. This protein is involved in the repair of mismatches in DNA. It is possible that it carries out the mismatch recognition step. This protein has a weak ATPase activity. This is DNA mismatch repair protein MutS from Bacillus mycoides (strain KBAB4) (Bacillus weihenstephanensis).